Here is a 286-residue protein sequence, read N- to C-terminus: Protein NipSnap homolog 2 (286 aa).

The N-terminal 40 residues, Met1–Pro40, are a transit peptide targeting the mitochondrion.

The protein belongs to the NipSnap family.

The protein localises to the mitochondrion matrix. In terms of biological role, protein involved in mitophagy. Accumulates on the mitochondria surface in response to mitochondrial depolarization and acts as a 'eat me' signal by recruiting proteins involved in selective autophagy. This Danio rerio (Zebrafish) protein is Protein NipSnap homolog 2 (nipsnap2).